The following is a 225-amino-acid chain: MRQRILVVDDDASLAEMLTIVLRGEGFDTAVIGDGTQALTAVRELRPDLVLLDLMLPGMNGIDVCRVLRADSGVPIVMLTAKTDTVDVVLGLESGADDYIMKPFKPKELVARVRARLRRNDDEPAEMLSIADVDIDVPAHKVTRNGEHISLTPLEFDLLVALARKPRQVFTRDVLLEQVWGYRHPADTRLVNVHVQRLRAKVEKDPENPTVVLTVRGVGYKAGPP.

The Response regulatory domain occupies 4 to 117; it reads RILVVDDDAS…ELVARVRARL (114 aa). Asp-53 is subject to 4-aspartylphosphate. A DNA-binding region (ompR/PhoB-type) is located at residues 125–224; that stretch reads AEMLSIADVD…VRGVGYKAGP (100 aa).

Phosphorylated by MtrB.

Functionally, member of the two-component regulatory system MtrA/MtrB. This Mycobacterium leprae (strain TN) protein is DNA-binding response regulator MtrA (mtrA).